Reading from the N-terminus, the 1182-residue chain is DNA-directed RNA polymerase subunit beta (1182 aa).

Belongs to the RNA polymerase beta chain family. The RNAP catalytic core consists of 2 alpha, 1 beta, 1 beta' and 1 omega subunit. When a sigma factor is associated with the core the holoenzyme is formed, which can initiate transcription.

It carries out the reaction RNA(n) + a ribonucleoside 5'-triphosphate = RNA(n+1) + diphosphate. In terms of biological role, DNA-dependent RNA polymerase catalyzes the transcription of DNA into RNA using the four ribonucleoside triphosphates as substrates. The chain is DNA-directed RNA polymerase subunit beta from Fervidobacterium nodosum (strain ATCC 35602 / DSM 5306 / Rt17-B1).